The chain runs to 597 residues: Exochitinase 1 (597 aa).

The or 32 signal peptide spans 1–29 (MDRFRPLAVLIAAALTLSGTTALSSAARA). The 82-residue stretch at 172–253 (PPTGLRTGSV…ATVTATTAPG (82 aa)) folds into the Fibronectin type-III domain. Residues 264-597 (HALVGYLHAS…FQRTFDGYFG (334 aa)) enclose the GH18 domain. Glutamate 384 acts as the Proton donor in catalysis.

The protein belongs to the glycosyl hydrolase 18 family. Chitinase class II subfamily. In terms of processing, the N-terminus is blocked.

The enzyme catalyses Random endo-hydrolysis of N-acetyl-beta-D-glucosaminide (1-&gt;4)-beta-linkages in chitin and chitodextrins.. With respect to regulation, inhibited by the pseudosugar allosamidin A. In terms of biological role, exochitinase that generates exclusively chitobiose from chitotetraose, chitohexaose, and colloidal high-molecular mass chitin. This is Exochitinase 1 (chi01) from Streptomyces olivaceoviridis (Streptomyces corchorusii).